The sequence spans 146 residues: uncharacterized protein (146 aa).

This is an uncharacterized protein from Acanthamoeba polyphaga mimivirus (APMV).